Reading from the N-terminus, the 164-residue chain is Endoribonuclease YbeY (164 aa).

Residues H130, H134, and H140 each coordinate Zn(2+).

This sequence belongs to the endoribonuclease YbeY family. Zn(2+) serves as cofactor.

Its subcellular location is the cytoplasm. In terms of biological role, single strand-specific metallo-endoribonuclease involved in late-stage 70S ribosome quality control and in maturation of the 3' terminus of the 16S rRNA. The chain is Endoribonuclease YbeY from Streptococcus mutans serotype c (strain ATCC 700610 / UA159).